The following is a 493-amino-acid chain: uncharacterized protein (493 aa).

S328 carries the phosphoserine modification. The segment covering 466–486 (AESNSGRGQNSKTKTTSVNLS) has biased composition (polar residues). The interval 466 to 493 (AESNSGRGQNSKTKTTSVNLSRNKRTRT) is disordered.

This is an uncharacterized protein from Schizosaccharomyces pombe (strain 972 / ATCC 24843) (Fission yeast).